A 30-amino-acid chain; its full sequence is MTDAQVFTILAIALVPAVMALLLGSALARS.

The helical transmembrane segment at 6–26 threads the bilayer; that stretch reads VFTILAIALVPAVMALLLGSA.

This sequence belongs to the PsaM family.

The protein resides in the cellular thylakoid membrane. This chain is Photosystem I reaction center subunit XII, found in Synechococcus sp. (strain JA-2-3B'a(2-13)) (Cyanobacteria bacterium Yellowstone B-Prime).